The chain runs to 580 residues: Purine permease (580 aa).

12 helical membrane passes run 68–88 (PLVL…AGVI), 107–127 (SQYL…VQMF), 136–156 (YYVG…ITVA), 184–204 (YGAL…LSFM), 211–231 (ALFP…SLIG), 263–283 (LPWG…TIIL), 294–314 (SCAV…CGYF), 385–405 (LGNG…MSVF), 426–446 (CCFF…LVAI), 447–467 (PSSV…ISGV), 481–501 (FILT…DWFS), and 522–542 (LVMA…NLIL).

The protein belongs to the nucleobase:cation symporter-2 (NCS2) (TC 2.A.40) family.

The protein resides in the membrane. Functionally, able to transport with low efficiency all natural purines as well as purine analogs. In Emericella nidulans (strain FGSC A4 / ATCC 38163 / CBS 112.46 / NRRL 194 / M139) (Aspergillus nidulans), this protein is Purine permease (uapC).